Here is an 89-residue protein sequence, read N- to C-terminus: Putative RING finger protein 121R (89 aa).

Residues 45-78 (CPICLIAKVNTVLECTHVLCSNCVKKINVCPICR) form an RING-type zinc finger.

The sequence is that of Putative RING finger protein 121R from Invertebrate iridescent virus 6 (IIV-6).